A 289-amino-acid chain; its full sequence is 4-hydroxy-3-methylbut-2-enyl diphosphate reductase (289 aa).

Cys12 contributes to the [4Fe-4S] cluster binding site. Residues His44 and His81 each contribute to the (2E)-4-hydroxy-3-methylbut-2-enyl diphosphate site. Residues His44 and His81 each coordinate dimethylallyl diphosphate. 2 residues coordinate isopentenyl diphosphate: His44 and His81. Cys103 contributes to the [4Fe-4S] cluster binding site. Position 130 (His130) interacts with (2E)-4-hydroxy-3-methylbut-2-enyl diphosphate. Dimethylallyl diphosphate is bound at residue His130. His130 lines the isopentenyl diphosphate pocket. The Proton donor role is filled by Glu132. Position 174 (Thr174) interacts with (2E)-4-hydroxy-3-methylbut-2-enyl diphosphate. A [4Fe-4S] cluster-binding site is contributed by Cys202. (2E)-4-hydroxy-3-methylbut-2-enyl diphosphate is bound by residues Ser230, Asn232, and Ser273. Dimethylallyl diphosphate is bound by residues Ser230, Asn232, and Ser273. Residues Ser230, Asn232, and Ser273 each coordinate isopentenyl diphosphate.

The protein belongs to the IspH family. The cofactor is [4Fe-4S] cluster.

The catalysed reaction is isopentenyl diphosphate + 2 oxidized [2Fe-2S]-[ferredoxin] + H2O = (2E)-4-hydroxy-3-methylbut-2-enyl diphosphate + 2 reduced [2Fe-2S]-[ferredoxin] + 2 H(+). The enzyme catalyses dimethylallyl diphosphate + 2 oxidized [2Fe-2S]-[ferredoxin] + H2O = (2E)-4-hydroxy-3-methylbut-2-enyl diphosphate + 2 reduced [2Fe-2S]-[ferredoxin] + 2 H(+). It functions in the pathway isoprenoid biosynthesis; dimethylallyl diphosphate biosynthesis; dimethylallyl diphosphate from (2E)-4-hydroxy-3-methylbutenyl diphosphate: step 1/1. It participates in isoprenoid biosynthesis; isopentenyl diphosphate biosynthesis via DXP pathway; isopentenyl diphosphate from 1-deoxy-D-xylulose 5-phosphate: step 6/6. Catalyzes the conversion of 1-hydroxy-2-methyl-2-(E)-butenyl 4-diphosphate (HMBPP) into a mixture of isopentenyl diphosphate (IPP) and dimethylallyl diphosphate (DMAPP). Acts in the terminal step of the DOXP/MEP pathway for isoprenoid precursor biosynthesis. The sequence is that of 4-hydroxy-3-methylbut-2-enyl diphosphate reductase from Treponema denticola (strain ATCC 35405 / DSM 14222 / CIP 103919 / JCM 8153 / KCTC 15104).